The primary structure comprises 612 residues: MENQLAKSTEERTFQYQDSLPSLPVPSLEESLKKYLESVKPFANEEEYKNTEAIVWKFQNGIGEKLQQKLLQRAKGRRNWLEEWWLNVAYLDVRIPSQLNVNFGGPASHIEHYWPPKEGTQLERGSISLWHNLNYWQLLRKEKLAVEKVGNTPLDMNQFRMLFSTCKIPGITRDSIINYFRTESEGHSPSHLAVLCRGRVFVFDVMHEGYLMTAPEIQRQLTYIQKKCHSEPDGPGVAALTTEERTRWAKAREYLISLNPENLTILEKIQSSLLVFCLDDDSPHVTPEDYSQVSAKILNGDPTVRWGDKSYNLIAFSNGVFGSNCDHAPFDAMVLVKVCYYVDENILENEGRWKGSEKVRDIPVPEELVFTVDEKVLNDINQAKAQYFKQVSDLQLVVYAFTSFGKKLTKEKQLHPDTFIQLALQLAYYRLHGRPGCCYETAMTRLFYHGRTETVRPCTVEAVNWCQSMQNPSTSLLERKHMMLEAFAKHNKMMKDCSTGKGFDRHLLGLSLIAKEEGLPVPELFTDPLFSRSGGGGNFVLSTSLVGYLRVQGVMVPMVHNGYGFFYHIRDDRFVVSCSAWKSCPETDAEKLVQQVFHAFCDMMQLMEMPHL.

Methionine 1 is subject to N-acetylmethionine. Lysine 40 and lysine 57 each carry N6-succinyllysine. The active-site Proton acceptor is histidine 327. Residues lysine 406 and lysine 410–aspartate 417 each bind CoA. Residue lysine 406 is modified to N6-acetyllysine; alternate. Lysine 406 bears the N6-succinyllysine; alternate mark. (R)-carnitine-binding residues include tyrosine 439, threonine 441, and threonine 452. Positions proline 610–leucine 612 match the Microbody targeting signal motif.

The protein belongs to the carnitine/choline acetyltransferase family. Monomer.

Its subcellular location is the peroxisome. The catalysed reaction is octanoyl-CoA + (R)-carnitine = O-octanoyl-(R)-carnitine + CoA. It carries out the reaction 4,8-dimethylnonanoyl-CoA + (R)-carnitine = O-4,8-dimethylnonanoyl-(R)-carnitine + CoA. The protein operates within lipid metabolism; fatty acid beta-oxidation. Its function is as follows. Beta-oxidation of fatty acids. The highest activity concerns the C6 to C10 chain length substrate. In Bos taurus (Bovine), this protein is Peroxisomal carnitine O-octanoyltransferase (CROT).